The following is a 69-amino-acid chain: Putative membrane protein insertion efficiency factor (69 aa).

The protein belongs to the UPF0161 family.

The protein localises to the cell membrane. Its function is as follows. Could be involved in insertion of integral membrane proteins into the membrane. The protein is Putative membrane protein insertion efficiency factor of Clostridium perfringens (strain SM101 / Type A).